A 3097-amino-acid chain; its full sequence is Neural-cadherin (3097 aa).

Positions 1 to 36 (MAARRCLNQLRQRYITNRFNICTCAIFLISLPFILA) are cleaved as a signal peptide. N-linked (GlcNAc...) asparagine glycans are attached at residues N97 and N150. Positions 181–305 (VRENQPAGTR…LDENDNRPIF (125 aa)) constitute a Cadherin 1 domain. N325 and N426 each carry an N-linked (GlcNAc...) asparagine glycan. 15 consecutive Cadherin domains span residues 430–543 (HREK…PPYF), 554–651 (VQLN…APQF), 660–756 (IPEN…APKF), 766–858 (VDED…EPKF), 867–968 (VDEN…KPVF), 978–1078 (VEEG…PPLF), 1087–1183 (VKQD…PPVW), 1193–1299 (VKEN…IPLF), 1307–1414 (VLEG…PPYF), 1423–1514 (VDEN…PPVF), 1523–1630 (ITEE…APIF), 1639–1742 (VTEN…PPQF), 1749–1861 (TEVD…KPHF), 1870–1966 (VFED…APKF), and 1974–2085 (LPEH…QPGS). N930 is a glycosylation site (N-linked (GlcNAc...) asparagine). N-linked (GlcNAc...) asparagine glycosylation occurs at N1266. Disulfide bonds link C2346-C2357, C2351-C2366, C2368-C2377, C2559-C2585, C2592-C2607, C2601-C2616, C2618-C2627, C2787-C2822, C2869-C2880, C2874-C2891, and C2893-C2902. An EGF-like 1 domain is found at 2346–2377 (CRTTPCHNGGRCVDTRFGPHCSCPVGYTGPRC). The Laminin G-like 1 domain maps to 2379 to 2585 (QTTRSFRGNG…GLSRNSVAGC (207 aa)). Residues 2592 to 2627 (CAQTETTARCWEHGNCVGSLSEARCHCRPGWTGPAC) enclose the EGF-like 2 domain. The Laminin G-like 2 domain occupies 2631–2822 (TIPTTFKAQS…TMARNLEKGC (192 aa)). The EGF-like 3 domain occupies 2869–2902 (CLDMPCMNGATCINLEPRLRYRCICPDGFWGENC). Residues 2917 to 2937 (ALAAILVCLLIILILVLVFVV) traverse the membrane as a helical segment. Over 2938–3097 (YNRRREAHIK…PNPHNTELEL (160 aa)) the chain is Cytoplasmic.

As to expression, in the embryo, the protein first appears in the mesoderm at stage 9 and is present in the myoblasts and muscle fibers by stage 12 and stage 14, respectively. At stage 12 the protein is also located in the axons of the entire CNS, but not in the glial cells. In third instar larvae protein is expressed in the CNS neuropile, photoreceptor axons and precursors of adult muscles.

The protein localises to the cell membrane. Functionally, cadherins are calcium-dependent cell adhesion proteins. They preferentially interact with themselves in a homophilic manner in connecting cells; cadherins may thus contribute to the sorting of heterogeneous cell types. May associate with arm neural isoform and participate in the transmission of developmental information. In Drosophila melanogaster (Fruit fly), this protein is Neural-cadherin (CadN).